Consider the following 407-residue polypeptide: Aspartate aminotransferase, cytoplasmic (407 aa).

L-aspartate contacts are provided by glycine 39, tryptophan 136, and asparagine 189. The residue at position 253 (lysine 253) is an N6-(pyridoxal phosphate)lysine. Residue arginine 381 coordinates L-aspartate.

This sequence belongs to the class-I pyridoxal-phosphate-dependent aminotransferase family. In terms of assembly, homodimer. Pyridoxal 5'-phosphate serves as cofactor.

It is found in the cytoplasm. The catalysed reaction is L-aspartate + 2-oxoglutarate = oxaloacetate + L-glutamate. Important for the metabolism of amino acids and Krebs-cycle related organic acids. In plants, it is involved in nitrogen metabolism and in aspects of carbon and energy metabolism. The sequence is that of Aspartate aminotransferase, cytoplasmic from Oryza sativa subsp. japonica (Rice).